The chain runs to 170 residues: Protein SprT (170 aa).

In terms of domain architecture, SprT-like spans 22–165 (LQLANQHLGT…RQCGEKLQFI (144 aa)). H78 is a Zn(2+) binding site. E79 is a catalytic residue. Residue H82 coordinates Zn(2+).

Belongs to the SprT family. It depends on Zn(2+) as a cofactor.

Its subcellular location is the cytoplasm. In Yersinia pseudotuberculosis serotype O:1b (strain IP 31758), this protein is Protein SprT.